The sequence spans 60 residues: Large ribosomal subunit protein uL30 (60 aa).

The protein belongs to the universal ribosomal protein uL30 family. In terms of assembly, part of the 50S ribosomal subunit.

The chain is Large ribosomal subunit protein uL30 from Flavobacterium psychrophilum (strain ATCC 49511 / DSM 21280 / CIP 103535 / JIP02/86).